The chain runs to 521 residues: MFS siderochrome iron transporter 1 (521 aa).

The span at 1 to 10 shows a compositional bias: polar residues; sequence MDKTASLTSQ. Positions 1 to 29 are disordered; the sequence is MDKTASLTSQDAEKHDPDALRKERATDPP. Residues 11–29 show a composition bias toward basic and acidic residues; that stretch reads DAEKHDPDALRKERATDPP. Helical transmembrane passes span 62–82, 99–119, 126–146, 148–168, and 187–207; these read WGLF…PLMG, FLSL…AFGC, WSFN…GGTQ, FVAL…NMPV, and ILSI…WPLI. Asparagine 209 is a glycosylation site (N-linked (GlcNAc...) asparagine). Transmembrane regions (helical) follow at residues 229-249, 330-350, 379-399, 404-424, 431-451, and 466-486; these read YLLF…FFVF, LAWS…ASTL, VIIA…VEQP, KGTL…TTTA, LGWN…LYAI, and GLTA…ALYA. Asparagine 487 is a glycosylation site (N-linked (GlcNAc...) asparagine). Residues 491 to 511 form a helical membrane-spanning segment; the sequence is AVPVYVSGALIIASGAMALLL.

Belongs to the major facilitator superfamily.

The protein resides in the membrane. In terms of biological role, major facilitator transporter probably involved in siderophore basidioferrin transmembrane transport. This is MFS siderochrome iron transporter 1 from Ceriporiopsis subvermispora (strain B) (White-rot fungus).